The chain runs to 348 residues: NADH-ubiquinone oxidoreductase chain 2 (348 aa).

Helical transmembrane passes span 3-23, 25-45, 67-87, 95-115, 118-138, 149-171, 178-198, 203-223, 240-260, 274-294, and 324-344; these read PVVLTIIISSLGLGTMMTFIG, HWLLVWMGLEINTLAIIPLMI, SALLLFASITNAWSLGEWSLL, ATLVTIALALKIGLAPMHFWL, VLQGLDLITGLILATWQKLAP, LNSNLLLFLGVSSTVIGGWGGLN, ILAYSSIAHLGWMITILHYSP, LNLALYIIMTLTTFLLFKLFN, LSIIALITLLSLGGLPPLSGF, DLAIPATIMALAALLSLFFYL, and LILMMATSLSILLLPLTPTIF.

This sequence belongs to the complex I subunit 2 family.

It localises to the mitochondrion inner membrane. It carries out the reaction a ubiquinone + NADH + 5 H(+)(in) = a ubiquinol + NAD(+) + 4 H(+)(out). Functionally, core subunit of the mitochondrial membrane respiratory chain NADH dehydrogenase (Complex I) that is believed to belong to the minimal assembly required for catalysis. Complex I functions in the transfer of electrons from NADH to the respiratory chain. The immediate electron acceptor for the enzyme is believed to be ubiquinone. The protein is NADH-ubiquinone oxidoreductase chain 2 (MT-ND2) of Squalus acanthias (Spiny dogfish).